The following is a 294-amino-acid chain: uncharacterized protein (294 aa).

The next 3 membrane-spanning stretches (helical) occupy residues 21 to 41 (AIVATNFSWLFITFFVMTFTF), 51 to 71 (PIIWTLYFFLCLIAFLLLWAA), and 77 to 97 (ILFSFAFGDVYSFFMAGVFLF). The interval 156-176 (HPVPFPAEPGSPDPVSPPPPI) is disordered. Residues 184-215 (ERAESLHAGNIELAEDLQRIQEMERNLENERS) adopt a coiled-coil conformation. The span at 265–277 (QQENESRLEERRF) shows a compositional bias: basic and acidic residues. The interval 265 to 294 (QQENESRLEERRFQSHSTNSLFEADSSRDN) is disordered.

Its subcellular location is the mitochondrion membrane. This is an uncharacterized protein from Arabidopsis thaliana (Mouse-ear cress).